Here is a 711-residue protein sequence, read N- to C-terminus: Acyl-CoA dehydrogenase FadE34 (711 aa).

This sequence belongs to the acyl-CoA dehydrogenase family. Homodimer. FAD is required as a cofactor.

It catalyses the reaction 3-oxochol-4-en-24-oyl-CoA + A = (22E)-3-oxochola-4,22-dien-24-oyl-CoA + AH2. The catalysed reaction is 3beta-hydroxy-chol-5-ene-24-oyl-CoA + A = 3beta-hydroxy-chol-5,22-dien-24-oyl-CoA + AH2. Its pathway is steroid metabolism; cholesterol degradation. Functionally, involved in the second cycle of side chain dehydrogenation in the beta-oxidation of cholesterol catabolism. It contributes partly to the virulence by increasing the efficiency of beta-oxidation. Catalyzes the dehydrogenation of the five-carbon steroid side chain of 3-oxo-chol-4-en-24-oyl-CoA (3-OCO-CoA) to yield 3-oxochol-4,22-dien-24-oyl-CoA. Can also use 3beta-hydroxy-chol-5-ene-24-oyl-CoA, and shows weak activity with cholyl-CoA and deoxycholyl-CoA. The polypeptide is Acyl-CoA dehydrogenase FadE34 (fadE34) (Mycobacterium tuberculosis (strain ATCC 25618 / H37Rv)).